Consider the following 32-residue polypeptide: SNKRKNAAMLDMIAQHAIRGCCSDPRCRYRCR.

A propeptide spanning residues Ser-1–Arg-19 is cleaved from the precursor. Cystine bridges form between Cys-21–Cys-27 and Cys-22–Cys-31.

The protein belongs to the conotoxin A superfamily. The disulfide bond CysI-CysIII is important for alpha-9-alpha-10 subtype inhibition, whereas the bond CysII-CysIV contributes to GABA(B) modulation. In terms of tissue distribution, expressed by the venom duct.

Its subcellular location is the secreted. Functionally, this toxin target two types of receptors, the nicotinic acetylcholine receptor (nAChR) and the G-protein-coupled receptor GABA(B). It specifically inhibits the alpha-9-alpha-10/CHRNA9-CHRNA10 nAChR, with preference for rat receptors. It interacts with the alpha-10(+)/alpha-9(-)interface of the receptor. It shows a two order of magnitude species difference potency for the rat versus human alpha-9-alpha-10 nAChR, due to the Thr-86 located in the alpha-9 nAChR subunit. This toxin also shows inhibition of high voltage-activated (HVA) calcium channels (Cav2.2) by acting on GABA(B) receptors (GABBR1 and GABBR2). In vivo, this toxin produces an acute antinociceptive effect in peripheral nerve-injured rats, which may be related to the inhibition of immune cell buildup at the site of nerve injury. In addition, when intramuscularly injected into rats following chronic constriction injury of the sciatic nerve, this toxin protects peripheral nervous tissues as well as prevents central maladaptive plasticity by inhibiting glial cell activation. In Conus regius (Crown cone), this protein is Alpha-conotoxin RgIA.